A 351-amino-acid polypeptide reads, in one-letter code: 3-hydroxy-4-methyl-anthranilyl-[aryl-carrier protein] 5-monooxygenase (351 aa).

The protein belongs to the aromatic-ring hydroxylase family. The cofactor is FAD.

It carries out the reaction 3-hydroxy-4-methylanthranilyl-[aryl-carrier protein] + NADH + O2 + H(+) = 3,5-dihydroxy-4-methylanthranilyl-[aryl-carrier protein] + NAD(+) + H2O. It functions in the pathway antibiotic biosynthesis. Involved in the biosynthesis of the antitumor antibiotic sibiromycin. Hydroxylates the C5 position of the peptidyl carrier protein (PCP)-bound 4-methyl-3-hydroxyanthranilic acid (4-MHA or 3H4MAA), leading to the formation of the fully substituted anthranilate moiety found in sibiromycin. In Streptosporangium sibiricum, this protein is 3-hydroxy-4-methyl-anthranilyl-[aryl-carrier protein] 5-monooxygenase.